The following is a 154-amino-acid chain: Regulatory protein RecX (154 aa).

This sequence belongs to the RecX family.

The protein localises to the cytoplasm. Its function is as follows. Modulates RecA activity. This is Regulatory protein RecX from Trichlorobacter lovleyi (strain ATCC BAA-1151 / DSM 17278 / SZ) (Geobacter lovleyi).